The chain runs to 364 residues: Natterin-3 (364 aa).

A signal peptide spans 1–18 (MKLSVLVVTLLAVSWTSA). A propeptide spanning residues 19–42 (QPETFSIQTKEANMNPEPANIRVA) is cleaved from the precursor.

The protein belongs to the natterin family. Contains 4 disulfide bonds. Expressed by the venom gland.

Its subcellular location is the secreted. Its activity is regulated as follows. Inhibited by tissue-kallikrein inhibitor TKI and trasylol. Plasma kallikrein inhibitor PKSI527 and classical inhibitors of serine-, metallo-, thiol- or aspartate-peptidases evokes a minor inhibition of the peptide digestion. Shows nociceptive, edema-inducing and kininogenase activity with release of kallidin from low molecular weight kininogen. The cleavage occurs at Met-Lys bonds. This Thalassophryne nattereri (Copper Joe toadfish) protein is Natterin-3.